The primary structure comprises 289 residues: ATP synthase gamma chain (289 aa).

It belongs to the ATPase gamma chain family. As to quaternary structure, F-type ATPases have 2 components, CF(1) - the catalytic core - and CF(0) - the membrane proton channel. CF(1) has five subunits: alpha(3), beta(3), gamma(1), delta(1), epsilon(1). CF(0) has three main subunits: a, b and c.

Its subcellular location is the cell inner membrane. Its function is as follows. Produces ATP from ADP in the presence of a proton gradient across the membrane. The gamma chain is believed to be important in regulating ATPase activity and the flow of protons through the CF(0) complex. The sequence is that of ATP synthase gamma chain from Cereibacter sphaeroides (strain ATCC 17023 / DSM 158 / JCM 6121 / CCUG 31486 / LMG 2827 / NBRC 12203 / NCIMB 8253 / ATH 2.4.1.) (Rhodobacter sphaeroides).